Reading from the N-terminus, the 64-residue chain is Large ribosomal subunit protein bL35 (64 aa).

Positions 1–14 (MKNKTHKGTAKRVK) are enriched in basic residues. The interval 1–30 (MKNKTHKGTAKRVKVTGSGKLVREQANRRH) is disordered. Positions 21–30 (LVREQANRRH) are enriched in basic and acidic residues.

This sequence belongs to the bacterial ribosomal protein bL35 family.

The chain is Large ribosomal subunit protein bL35 from Corynebacterium efficiens (strain DSM 44549 / YS-314 / AJ 12310 / JCM 11189 / NBRC 100395).